Consider the following 60-residue polypeptide: Large ribosomal subunit protein uL30 (60 aa).

It belongs to the universal ribosomal protein uL30 family. In terms of assembly, part of the 50S ribosomal subunit.

The protein is Large ribosomal subunit protein uL30 of Limosilactobacillus reuteri (strain DSM 20016) (Lactobacillus reuteri).